A 264-amino-acid chain; its full sequence is Small ribosomal subunit protein uS2 (264 aa).

Acidic residues predominate over residues 243 to 253 (IEAAEDGEEVD). Residues 243–264 (IEAAEDGEEVDNAQLTSSQGRS) form a disordered region. The span at 255–264 (AQLTSSQGRS) shows a compositional bias: polar residues.

It belongs to the universal ribosomal protein uS2 family.

The polypeptide is Small ribosomal subunit protein uS2 (Deinococcus geothermalis (strain DSM 11300 / CIP 105573 / AG-3a)).